Reading from the N-terminus, the 301-residue chain is MEPNELKRALGAGLLSFPVTPFDDKGEFNPDVYGAHIDWLSGYDATVLFAAGGTGEMFSLSPDEIPNIVATAKAASNGVPIVGGCGGGTRVAVEIAKGIEKAGGDGILLLPQYLIDAPQAGLYAHVKAVCDAVGFGVTVYNRDNCVLQTETIQRLADDCPNLIGFKDGTGELGLVRRITATLGDRLTYIGGMPTAELFAEAYLGAGFSTYSSAVFNFVPQLACDFYKALRAGDRATCENILNRFFFPFMDLRSRQKGYAVAAIKAGVRLQGFAAGSVRPPLTDLTSQEVDILAGLIEPWKQ.

It belongs to the DapA family.

The catalysed reaction is 5-dehydro-4-deoxy-D-glucarate + H(+) = 2,5-dioxopentanoate + CO2 + H2O. It functions in the pathway carbohydrate acid metabolism; D-glucarate degradation; 2,5-dioxopentanoate from D-glucarate: step 2/2. The protein is Probable 5-dehydro-4-deoxyglucarate dehydratase of Allorhizobium ampelinum (strain ATCC BAA-846 / DSM 112012 / S4) (Agrobacterium vitis (strain S4)).